We begin with the raw amino-acid sequence, 102 residues long: Large ribosomal subunit protein uL23 (102 aa).

This sequence belongs to the universal ribosomal protein uL23 family. Part of the 50S ribosomal subunit. Contacts protein L29, and trigger factor when it is bound to the ribosome.

In terms of biological role, one of the early assembly proteins it binds 23S rRNA. One of the proteins that surrounds the polypeptide exit tunnel on the outside of the ribosome. Forms the main docking site for trigger factor binding to the ribosome. This chain is Large ribosomal subunit protein uL23, found in Methylobacillus flagellatus (strain ATCC 51484 / DSM 6875 / VKM B-1610 / KT).